Here is a 213-residue protein sequence, read N- to C-terminus: Orotate phosphoribosyltransferase (213 aa).

5-phospho-alpha-D-ribose 1-diphosphate is bound at residue Lys-26. 34–35 (FF) serves as a coordination point for orotate. 5-phospho-alpha-D-ribose 1-diphosphate contacts are provided by residues 72–73 (YK), Arg-99, Lys-100, Lys-103, His-105, and 124–132 (DDVITAGTA). Residues Thr-128 and Arg-156 each contribute to the orotate site.

This sequence belongs to the purine/pyrimidine phosphoribosyltransferase family. PyrE subfamily. Homodimer. It depends on Mg(2+) as a cofactor.

The enzyme catalyses orotidine 5'-phosphate + diphosphate = orotate + 5-phospho-alpha-D-ribose 1-diphosphate. It participates in pyrimidine metabolism; UMP biosynthesis via de novo pathway; UMP from orotate: step 1/2. In terms of biological role, catalyzes the transfer of a ribosyl phosphate group from 5-phosphoribose 1-diphosphate to orotate, leading to the formation of orotidine monophosphate (OMP). The polypeptide is Orotate phosphoribosyltransferase (Haemophilus ducreyi (strain 35000HP / ATCC 700724)).